The chain runs to 137 residues: Large ribosomal subunit protein uL16 (137 aa).

The protein belongs to the universal ribosomal protein uL16 family. In terms of assembly, part of the 50S ribosomal subunit.

Its function is as follows. Binds 23S rRNA and is also seen to make contacts with the A and possibly P site tRNAs. This is Large ribosomal subunit protein uL16 from Nitrobacter winogradskyi (strain ATCC 25391 / DSM 10237 / CIP 104748 / NCIMB 11846 / Nb-255).